The primary structure comprises 436 residues: GTPase Der (436 aa).

EngA-type G domains are found at residues 4 to 167 and 176 to 351; these read PVVA…PKGG and IKFC…DNHA. GTP is bound by residues 10–17, 57–61, 119–122, 182–189, 229–233, and 294–297; these read GRPNVGKS, DTGGI, NKID, DTAGM, and NKWD. The region spanning 352-436 is the KH-like domain; the sequence is MRVQTNVLNE…PIKIIARPRK (85 aa).

This sequence belongs to the TRAFAC class TrmE-Era-EngA-EngB-Septin-like GTPase superfamily. EngA (Der) GTPase family. As to quaternary structure, associates with the 50S ribosomal subunit.

Its function is as follows. GTPase that plays an essential role in the late steps of ribosome biogenesis. The protein is GTPase Der of Geobacillus kaustophilus (strain HTA426).